A 200-amino-acid polypeptide reads, in one-letter code: Small ribosomal subunit protein uS4 (200 aa).

The interval Thr22–Lys42 is disordered. Positions Ala92 to Lys152 constitute an S4 RNA-binding domain.

It belongs to the universal ribosomal protein uS4 family. In terms of assembly, part of the 30S ribosomal subunit. Contacts protein S5. The interaction surface between S4 and S5 is involved in control of translational fidelity.

Its function is as follows. One of the primary rRNA binding proteins, it binds directly to 16S rRNA where it nucleates assembly of the body of the 30S subunit. In terms of biological role, with S5 and S12 plays an important role in translational accuracy. This Bacillus thuringiensis subsp. konkukian (strain 97-27) protein is Small ribosomal subunit protein uS4.